A 475-amino-acid polypeptide reads, in one-letter code: Bifunctional protein HldE (475 aa).

Positions 1 to 318 are ribokinase; that stretch reads MMQYSLKFNQ…ENAIHHREET (318 aa). ATP is bound at residue 195 to 198; sequence NMAE. The active site involves aspartate 264. The tract at residues 344 to 475 is cytidylyltransferase; that stretch reads MTNGCFDILH…DVIKKIQAIR (132 aa).

In the N-terminal section; belongs to the carbohydrate kinase PfkB family. This sequence in the C-terminal section; belongs to the cytidylyltransferase family. Homodimer.

The enzyme catalyses D-glycero-beta-D-manno-heptose 7-phosphate + ATP = D-glycero-beta-D-manno-heptose 1,7-bisphosphate + ADP + H(+). It catalyses the reaction D-glycero-beta-D-manno-heptose 1-phosphate + ATP + H(+) = ADP-D-glycero-beta-D-manno-heptose + diphosphate. It participates in nucleotide-sugar biosynthesis; ADP-L-glycero-beta-D-manno-heptose biosynthesis; ADP-L-glycero-beta-D-manno-heptose from D-glycero-beta-D-manno-heptose 7-phosphate: step 1/4. It functions in the pathway nucleotide-sugar biosynthesis; ADP-L-glycero-beta-D-manno-heptose biosynthesis; ADP-L-glycero-beta-D-manno-heptose from D-glycero-beta-D-manno-heptose 7-phosphate: step 3/4. Its pathway is bacterial outer membrane biogenesis; LOS core biosynthesis. Catalyzes the phosphorylation of D-glycero-D-manno-heptose 7-phosphate at the C-1 position to selectively form D-glycero-beta-D-manno-heptose-1,7-bisphosphate. In terms of biological role, catalyzes the ADP transfer from ATP to D-glycero-beta-D-manno-heptose 1-phosphate, yielding ADP-D-glycero-beta-D-manno-heptose. The polypeptide is Bifunctional protein HldE (Haemophilus ducreyi (strain 35000HP / ATCC 700724)).